A 419-amino-acid polypeptide reads, in one-letter code: Oligouridylate-binding protein 1B (419 aa).

RRM domains lie at 54–128 (RSVY…WAYA) and 139–217 (FNIF…WATK). A disordered region spans residues 217–257 (KGATSGEDKQSSDSKSVVELTSGVSEDGKDTTNGEAPENNA). Serine 241 carries the post-translational modification Phosphoserine. The 76-residue stretch at 260-335 (TTVYVGNLAP…RQMKCSWGSK (76 aa)) folds into the RRM 3 domain.

As to quaternary structure, interacts with UBA1A and UBA2A.

It is found in the nucleus. In terms of biological role, heterogeneous nuclear ribonucleoprotein (hnRNP)-like protein that acts as a component of the pre-mRNA processing machinery. Functions to facilitate the nuclear maturation of plant pre-mRNAs. This is Oligouridylate-binding protein 1B (UBP1B) from Arabidopsis thaliana (Mouse-ear cress).